A 576-amino-acid chain; its full sequence is WD repeat-containing protein 26 (576 aa).

A compositionally biased stretch (polar residues) spans 1–20; the sequence is MQSNGTGQEQNHPANTQNGD. The disordered stretch occupies residues 1-46; sequence MQSNGTGQEQNHPANTQNGDANGLQSNAGSASGASGTGSGSLKKKK. A compositionally biased stretch (low complexity) spans 21–34; sequence ANGLQSNAGSASGA. Ser49 is subject to Phosphoserine. Positions 51-83 constitute a LisH domain; sequence AEEDVIRLIGQHLHGLGLNQTVDLLMQESGCRL. The region spanning 84–143 is the CTLH domain; the sequence is EHSSATKFRNHVMEGEWDKAENDLNELKALMHSPNAIVRMKFLLLQQKYLEYLEDGKVLE. WD repeat units follow at residues 265-304, 311-350, 356-396, 436-475, 478-520, and 523-563; these read EHCN…HQLK, GHAY…GELR, SHED…ESWE, QEDH…LVRK, GVTQ…PIVE, and GHTR…DAQE.

Forms homooligomers. Identified in the CTLH complex that contains at least MAEA, RMND5A (or alternatively its paralog RMND5B), GID8, WDR26, and RANBP9 and/or RANBP10. Interacts with DDB1-CUL4A/B E3 ligase complexes.

It is found in the cytoplasm. It localises to the nucleus. The protein resides in the mitochondrion. Functionally, G-beta-like protein involved in cell signal transduction. Acts as a negative regulator in MAPK signaling pathway. Functions as a scaffolding protein to promote G beta:gamma-mediated PLCB2 plasma membrane translocation and subsequent activation in leukocytes. Core component of the CTLH E3 ubiquitin-protein ligase complex that mediates ubiquitination and subsequent proteasomal degradation of target proteins. Acts as a negative regulator of the canonical Wnt signaling pathway through preventing ubiquitination of beta-catenin CTNNB1 by the beta-catenin destruction complex, thus negatively regulating CTNNB1 degradation. Serves as a scaffold to coordinate PI3K/AKT pathway-driven cell growth and migration. Protects cells from oxidative stress-induced apoptosis via the down-regulation of AP-1 transcriptional activity as well as by inhibiting cytochrome c release from mitochondria. Also protects cells by promoting hypoxia-mediated autophagy and mitophagy. The polypeptide is WD repeat-containing protein 26 (wdr26) (Danio rerio (Zebrafish)).